The chain runs to 1380 residues: DNA-directed RNA polymerase subunit beta (1380 aa).

This sequence belongs to the RNA polymerase beta chain family. In terms of assembly, the RNAP catalytic core consists of 2 alpha, 1 beta, 1 beta' and 1 omega subunit. When a sigma factor is associated with the core the holoenzyme is formed, which can initiate transcription.

The enzyme catalyses RNA(n) + a ribonucleoside 5'-triphosphate = RNA(n+1) + diphosphate. In terms of biological role, DNA-dependent RNA polymerase catalyzes the transcription of DNA into RNA using the four ribonucleoside triphosphates as substrates. The protein is DNA-directed RNA polymerase subunit beta of Sinorhizobium fredii (strain NBRC 101917 / NGR234).